We begin with the raw amino-acid sequence, 394 residues long: Probable aspartate/prephenate aminotransferase (394 aa).

Positions 40, 126, and 176 each coordinate L-aspartate. Lysine 239 is subject to N6-(pyridoxal phosphate)lysine. Residue arginine 370 coordinates L-aspartate.

Belongs to the class-I pyridoxal-phosphate-dependent aminotransferase family. As to quaternary structure, homodimer. Requires pyridoxal 5'-phosphate as cofactor.

It localises to the cytoplasm. The enzyme catalyses L-aspartate + 2-oxoglutarate = oxaloacetate + L-glutamate. The catalysed reaction is L-arogenate + oxaloacetate = prephenate + L-aspartate. Its function is as follows. Catalyzes the reversible conversion of aspartate and 2-oxoglutarate to glutamate and oxaloacetate. Can also transaminate prephenate in the presence of aspartate. The sequence is that of Probable aspartate/prephenate aminotransferase (aspC) from Aquifex aeolicus (strain VF5).